Reading from the N-terminus, the 243-residue chain is Transmembrane protein 176A (243 aa).

Ser42 carries the phosphoserine modification. Helical transmembrane passes span 65–85 (WVVQ…LYIC), 92–112 (TQGA…VAFL), 122–142 (ALMR…AIVI), and 204–224 (LLGV…VYLW).

The protein belongs to the TMEM176 family. In terms of assembly, interacts with MCOLN2.

It is found in the membrane. This is Transmembrane protein 176A (Tmem176a) from Rattus norvegicus (Rat).